The primary structure comprises 177 residues: ATP-dependent protease subunit HslV (177 aa).

Thr-6 is an active-site residue. Residues Ser-162, Cys-165, and Thr-168 each coordinate Na(+).

Belongs to the peptidase T1B family. HslV subfamily. A double ring-shaped homohexamer of HslV is capped on each side by a ring-shaped HslU homohexamer. The assembly of the HslU/HslV complex is dependent on binding of ATP.

It localises to the cytoplasm. It catalyses the reaction ATP-dependent cleavage of peptide bonds with broad specificity.. Its activity is regulated as follows. Allosterically activated by HslU binding. In terms of biological role, protease subunit of a proteasome-like degradation complex believed to be a general protein degrading machinery. The polypeptide is ATP-dependent protease subunit HslV (Desulforudis audaxviator (strain MP104C)).